An 84-amino-acid polypeptide reads, in one-letter code: Dolichol phosphate-mannose biosynthesis regulatory protein (84 aa).

2 helical membrane passes run 11-31 (LGLV…VILL) and 49-69 (YAIA…GIFI).

It belongs to the DPM2 family. As to quaternary structure, component of the dolichol-phosphate mannose (DPM) synthase complex composed of DPM1, DPM2 and DPM3; in the complex interacts directly with DPM3. Component of the glycosylphosphatidylinositol-N-acetylglucosaminyltransferase (GPI-GnT) complex composed at least by PIGA, PIGC, PIGH, PIGP, PIGQ, PIGY and DPM2. Interacts with PIGA, PIGC and PIGQ.

It localises to the endoplasmic reticulum membrane. It participates in protein modification; protein glycosylation. Its function is as follows. Regulates the biosynthesis of dolichol phosphate-mannose. Regulatory subunit of the dolichol-phosphate mannose (DPM) synthase complex; essential for the ER localization and stable expression of DPM1. Part of the glycosylphosphatidylinositol-N-acetylglucosaminyltransferase (GPI-GnT) complex that catalyzes the transfer of N-acetylglucosamine from UDP-N-acetylglucosamine to phosphatidylinositol and participates in the first step of GPI biosynthesis. May act by regulating the GPI-GNT complex. The protein is Dolichol phosphate-mannose biosynthesis regulatory protein of Bos taurus (Bovine).